The sequence spans 124 residues: Small ribosomal subunit protein uS12 (124 aa).

The segment at 1–24 is disordered; sequence MPTINQLVRQGRKKSVKKTNTPAL. Position 89 is a 3-methylthioaspartic acid (D89).

This sequence belongs to the universal ribosomal protein uS12 family. Part of the 30S ribosomal subunit. Contacts proteins S8 and S17. May interact with IF1 in the 30S initiation complex.

In terms of biological role, with S4 and S5 plays an important role in translational accuracy. Interacts with and stabilizes bases of the 16S rRNA that are involved in tRNA selection in the A site and with the mRNA backbone. Located at the interface of the 30S and 50S subunits, it traverses the body of the 30S subunit contacting proteins on the other side and probably holding the rRNA structure together. The combined cluster of proteins S8, S12 and S17 appears to hold together the shoulder and platform of the 30S subunit. This chain is Small ribosomal subunit protein uS12, found in Desulfotalea psychrophila (strain LSv54 / DSM 12343).